The primary structure comprises 356 residues: tRNA-specific 2-thiouridylase MnmA (356 aa).

ATP-binding positions include 6-13 (AMSGGVDS) and L32. The active-site Nucleophile is C101. C101 and C193 are disulfide-bonded. G125 is a binding site for ATP. The interval 143–145 (KDQ) is interaction with tRNA. Catalysis depends on C193, which acts as the Cysteine persulfide intermediate.

It belongs to the MnmA/TRMU family.

It is found in the cytoplasm. The enzyme catalyses S-sulfanyl-L-cysteinyl-[protein] + uridine(34) in tRNA + AH2 + ATP = 2-thiouridine(34) in tRNA + L-cysteinyl-[protein] + A + AMP + diphosphate + H(+). Its function is as follows. Catalyzes the 2-thiolation of uridine at the wobble position (U34) of tRNA, leading to the formation of s(2)U34. This chain is tRNA-specific 2-thiouridylase MnmA, found in Mycolicibacterium smegmatis (strain ATCC 700084 / mc(2)155) (Mycobacterium smegmatis).